Reading from the N-terminus, the 408-residue chain is UV excision repair protein RAD23 homolog B (408 aa).

The Ubiquitin-like domain maps to 1 to 79; the sequence is MLVTLKTLQQ…VVVMVTKPKA (79 aa). Positions 80-111 are enriched in low complexity; sequence VTTPAPATTQQSNSAATTTVSSSTAPAVTQAP. The segment at 80 to 176 is disordered; that stretch reads VTTPAPATTQ…TSGDSSRSNL (97 aa). Over residues 112–122 the composition is skewed to pro residues; the sequence is APAPASAPTPT. Residues 123 to 143 are compositionally biased toward low complexity; that stretch reads PVSVTPAPTTASSEPAPASAA. Residues 144–153 are compositionally biased toward basic and acidic residues; sequence KQEKPAERPV. Low complexity predominate over residues 154-174; sequence ETPVATTPTSTDSTSGDSSRS. Phosphothreonine is present on residues threonine 155 and threonine 164. Serine 174 is modified (phosphoserine). Phosphothreonine is present on threonine 186. The UBA 1 domain maps to 188 to 228; the sequence is QSYENMVTEIMSMGYEREQVIAALRASFNNPDRAVEYLLMG. Residue serine 199 is modified to Phosphoserine. Tyrosine 202 carries the post-translational modification Phosphotyrosine. The disordered stretch occupies residues 236–274; the sequence is QAVVDPPPAASTGAPQSSVAAAAATTTATTTTTSSGGHP. The segment covering 255 to 268 has biased composition (low complexity); that stretch reads AAAAATTTATTTTT. An STI1 domain is found at 273–316; sequence HPLEFLRNQPQFQQMRQIIQQNPSLLPALLQQIGRENPQLLQQI. In terms of domain architecture, UBA 2 spans 363 to 403; the sequence is PQEKEAIERLKALGFPEGLVIQAYFACEKNENLAANFLLQQ.

This sequence belongs to the RAD23 family. As to quaternary structure, component of the XPC complex composed of XPC, RAD23B and CETN2. Interacts with NGLY1 and PSMC1. Interacts with ATXN3. Interacts with PSMD4 and PSMC5. Interacts with AMFR. Interacts with VCP; the interaction is indirect and mediated by NGLY1.

The protein resides in the nucleus. Its subcellular location is the cytoplasm. Multiubiquitin chain receptor involved in modulation of proteasomal degradation. Binds to polyubiquitin chains. Proposed to be capable to bind simultaneously to the 26S proteasome and to polyubiquitinated substrates and to deliver ubiquitinated proteins to the proteasome. May play a role in endoplasmic reticulum-associated degradation (ERAD) of misfolded glycoproteins by association with PNGase and delivering deglycosylated proteins to the proteasome. Functionally, involved in global genome nucleotide excision repair (GG-NER) by acting as component of the XPC complex. Cooperatively with CETN2 appears to stabilize XPC. May protect XPC from proteasomal degradation. Its function is as follows. The XPC complex is proposed to represent the first factor bound at the sites of DNA damage and together with other core recognition factors, XPA, RPA and the TFIIH complex, is part of the pre-incision (or initial recognition) complex. The XPC complex recognizes a wide spectrum of damaged DNA characterized by distortions of the DNA helix such as single-stranded loops, mismatched bubbles or single-stranded overhangs. The orientation of XPC complex binding appears to be crucial for inducing a productive NER. XPC complex is proposed to recognize and to interact with unpaired bases on the undamaged DNA strand which is followed by recruitment of the TFIIH complex and subsequent scanning for lesions in the opposite strand in a 5'-to-3' direction by the NER machinery. Cyclobutane pyrimidine dimers (CPDs) which are formed upon UV-induced DNA damage esacpe detection by the XPC complex due to a low degree of structural perurbation. Instead they are detected by the UV-DDB complex which in turn recruits and cooperates with the XPC complex in the respective DNA repair. In vitro, the XPC:RAD23B dimer is sufficient to initiate NER; it preferentially binds to cisplatin and UV-damaged double-stranded DNA and also binds to a variety of chemically and structurally diverse DNA adducts. XPC:RAD23B contacts DNA both 5' and 3' of a cisplatin lesion with a preference for the 5' side. XPC:RAD23B induces a bend in DNA upon binding. XPC:RAD23B stimulates the activity of DNA glycosylases TDG and SMUG1. The protein is UV excision repair protein RAD23 homolog B (RAD23B) of Bos taurus (Bovine).